Consider the following 89-residue polypeptide: Small ribosomal subunit protein uS15 (89 aa).

Belongs to the universal ribosomal protein uS15 family. As to quaternary structure, part of the 30S ribosomal subunit. Forms a bridge to the 50S subunit in the 70S ribosome, contacting the 23S rRNA.

Functionally, one of the primary rRNA binding proteins, it binds directly to 16S rRNA where it helps nucleate assembly of the platform of the 30S subunit by binding and bridging several RNA helices of the 16S rRNA. In terms of biological role, forms an intersubunit bridge (bridge B4) with the 23S rRNA of the 50S subunit in the ribosome. The chain is Small ribosomal subunit protein uS15 from Synechocystis sp. (strain ATCC 27184 / PCC 6803 / Kazusa).